A 237-amino-acid polypeptide reads, in one-letter code: Redox-sensing transcriptional repressor Rex (237 aa).

A DNA-binding region (H-T-H motif) is located at residues Leu-45–Ile-84. Gly-119–Gly-124 contributes to the NAD(+) binding site.

This sequence belongs to the transcriptional regulatory Rex family. As to quaternary structure, homodimer.

It is found in the cytoplasm. Modulates transcription in response to changes in cellular NADH/NAD(+) redox state. The sequence is that of Redox-sensing transcriptional repressor Rex from Rhodopirellula baltica (strain DSM 10527 / NCIMB 13988 / SH1).